Here is a 155-residue protein sequence, read N- to C-terminus: Small ribosomal subunit protein uS7c (155 aa).

It belongs to the universal ribosomal protein uS7 family. As to quaternary structure, part of the 30S ribosomal subunit.

The protein localises to the plastid. Its subcellular location is the chloroplast. One of the primary rRNA binding proteins, it binds directly to 16S rRNA where it nucleates assembly of the head domain of the 30S subunit. This chain is Small ribosomal subunit protein uS7c (rps7), found in Spirogyra maxima (Green alga).